The following is a 206-amino-acid chain: Elongation factor 1-beta (206 aa).

Position 2 is an N-acetylalanine (Ala2). Lys13 participates in a covalent cross-link: Glycyl lysine isopeptide (Lys-Gly) (interchain with G-Cter in ubiquitin). A phosphoserine mark is found at Ser31 and Ser86.

This sequence belongs to the EF-1-beta/EF-1-delta family. In terms of assembly, the eukaryotic elongation factor 1 complex (eEF1) is probably a heterohexamer. Two trimeric complexes, each composed of eEF1A (TEF1 or TEF2), eEF1Balpha (EFB1) and eEF1Bgamma (CAM1 or TEF4), are probably dimerized via the eF1Bgamma subunits. eEF1Balpha interacts directly with eEF1A. eEF1Balpha and eEF1Bgamma form the eEF1B subcomplex with the GEF activity. Post-translationally, S-thiolated in response to oxidative stress, probably inhibiting the protein and causing a reduction in protein synthesis.

The protein operates within protein biosynthesis; polypeptide chain elongation. Its function is as follows. Catalytic subunit of the guanine nucleotide exchange factor (GEF) (eEF1B subcomplex) of the eukaryotic elongation factor 1 complex (eEF1). Stimulates the exchange of GDP for GTP on elongation factor 1A (eEF1A), probably by displacing GDP from the nucleotide binding pocket in eEF1A. The 30-fold higher concentration of GTP compared to GDP in cells favors the formation of eEF1A-GTP, which rapidly forms a ternary complex with aminoacyl-tRNA that in turn displaces eEF1B from the complex. In Saccharomyces cerevisiae (strain ATCC 204508 / S288c) (Baker's yeast), this protein is Elongation factor 1-beta (EFB1).